The primary structure comprises 241 residues: tRNA pseudouridine synthase B (241 aa).

The Nucleophile role is filled by Asp-45.

The protein belongs to the pseudouridine synthase TruB family. Type 1 subfamily.

The catalysed reaction is uridine(55) in tRNA = pseudouridine(55) in tRNA. Its function is as follows. Responsible for synthesis of pseudouridine from uracil-55 in the psi GC loop of transfer RNAs. The sequence is that of tRNA pseudouridine synthase B from Chlamydia muridarum (strain MoPn / Nigg).